Reading from the N-terminus, the 68-residue chain is ATP synthase protein 8 (68 aa).

The chain crosses the membrane as a helical span at residues 8 to 24 (TWLTIITPTLLALFLIT). Lys54 bears the N6-acetyllysine; alternate mark. An N6-succinyllysine; alternate modification is found at Lys54. An N6-acetyllysine modification is found at Lys57.

Belongs to the ATPase protein 8 family. As to quaternary structure, F-type ATPases have 2 components, CF(1) - the catalytic core - and CF(0) - the membrane proton channel. Component of an ATP synthase complex composed of ATP5PB, ATP5MC1, ATP5F1E, ATP5PD, ATP5ME, ATP5PF, ATP5MF, MT-ATP6, MT-ATP8, ATP5F1A, ATP5F1B, ATP5F1D, ATP5F1C, ATP5PO, ATP5MG, ATP5MK and ATP5MJ. Interacts with PRICKLE3.

It is found in the mitochondrion membrane. Its function is as follows. Mitochondrial membrane ATP synthase (F(1)F(0) ATP synthase or Complex V) produces ATP from ADP in the presence of a proton gradient across the membrane which is generated by electron transport complexes of the respiratory chain. F-type ATPases consist of two structural domains, F(1) - containing the extramembraneous catalytic core and F(0) - containing the membrane proton channel, linked together by a central stalk and a peripheral stalk. During catalysis, ATP synthesis in the catalytic domain of F(1) is coupled via a rotary mechanism of the central stalk subunits to proton translocation. Part of the complex F(0) domain. Minor subunit located with subunit a in the membrane. The polypeptide is ATP synthase protein 8 (MT-ATP8) (Pongo pygmaeus (Bornean orangutan)).